The sequence spans 221 residues: Probable septum site-determining protein MinC (221 aa).

This sequence belongs to the MinC family. In terms of assembly, interacts with MinD and FtsZ.

Cell division inhibitor that blocks the formation of polar Z ring septums. Rapidly oscillates between the poles of the cell to destabilize FtsZ filaments that have formed before they mature into polar Z rings. Prevents FtsZ polymerization. The chain is Probable septum site-determining protein MinC from Aliivibrio fischeri (strain ATCC 700601 / ES114) (Vibrio fischeri).